Here is a 471-residue protein sequence, read N- to C-terminus: Glutamate--tRNA ligase (471 aa).

The short motif at Pro9 to Gly19 is the 'HIGH' region element. The Zn(2+) site is built by Cys98, Cys100, Cys125, and Asp127. The short motif at Lys237–Arg241 is the 'KMSKS' region element. Lys240 provides a ligand contact to ATP.

This sequence belongs to the class-I aminoacyl-tRNA synthetase family. Glutamate--tRNA ligase type 1 subfamily. As to quaternary structure, monomer. It depends on Zn(2+) as a cofactor.

It localises to the cytoplasm. It catalyses the reaction tRNA(Glu) + L-glutamate + ATP = L-glutamyl-tRNA(Glu) + AMP + diphosphate. In terms of biological role, catalyzes the attachment of glutamate to tRNA(Glu) in a two-step reaction: glutamate is first activated by ATP to form Glu-AMP and then transferred to the acceptor end of tRNA(Glu). The protein is Glutamate--tRNA ligase of Yersinia pseudotuberculosis serotype IB (strain PB1/+).